Here is a 215-residue protein sequence, read N- to C-terminus: Large ribosomal subunit protein uL16m (215 aa).

A mitochondrion-targeting transit peptide spans 1–36; the sequence is MALQQYNKFPFFFSGILGPTRLNGLQMPPIQTMVRW.

Belongs to the universal ribosomal protein uL16 family. Component of the mitochondrial large ribosomal subunit (mt-LSU). Mature yeast 74S mitochondrial ribosomes consist of a small (37S) and a large (54S) subunit. The 37S small subunit contains a 15S ribosomal RNA (15S mt-rRNA) and at least 32 different proteins. The 54S large subunit contains a 21S rRNA (21S mt-rRNA) and at least 45 different proteins.

It is found in the mitochondrion. In terms of biological role, component of the mitochondrial ribosome (mitoribosome), a dedicated translation machinery responsible for the synthesis of mitochondrial genome-encoded proteins, including at least some of the essential transmembrane subunits of the mitochondrial respiratory chain. The mitoribosomes are attached to the mitochondrial inner membrane and translation products are cotranslationally integrated into the membrane. The polypeptide is Large ribosomal subunit protein uL16m (mrpl16) (Schizosaccharomyces pombe (strain 972 / ATCC 24843) (Fission yeast)).